The sequence spans 309 residues: tRNA dimethylallyltransferase (309 aa).

An ATP-binding site is contributed by 9 to 16 (GPTAVGKT). 11–16 (TAVGKT) is a substrate binding site. Residues 34-37 (DSMQ) form an interaction with substrate tRNA region.

Belongs to the IPP transferase family. As to quaternary structure, monomer. Mg(2+) is required as a cofactor.

It catalyses the reaction adenosine(37) in tRNA + dimethylallyl diphosphate = N(6)-dimethylallyladenosine(37) in tRNA + diphosphate. Catalyzes the transfer of a dimethylallyl group onto the adenine at position 37 in tRNAs that read codons beginning with uridine, leading to the formation of N6-(dimethylallyl)adenosine (i(6)A). The chain is tRNA dimethylallyltransferase from Enterococcus faecalis (strain ATCC 700802 / V583).